Consider the following 103-residue polypeptide: MLCVTTSDIIGREITETLGVVTGNVVQSKHVGRDIMAGFKTIFGGEIRGYTEMLTEAREEALNRAIADAQSQGADAIVNLRFTTSAIMQGASEILAYGTAVKL.

The protein belongs to the UPF0145 family.

The chain is UPF0145 protein PBPRB0184 from Photobacterium profundum (strain SS9).